The sequence spans 134 residues: Cytochrome c-550 (134 aa).

Gln-1 carries the pyrrolidone carboxylic acid modification. Positions 15, 18, 19, and 100 each coordinate heme c.

Binds 1 heme c group covalently per subunit.

Its function is as follows. Electron donor for nitrous-oxide reductase. The sequence is that of Cytochrome c-550 from Paracoccus pantotrophus (Thiosphaera pantotropha).